Consider the following 297-residue polypeptide: N-acetylneuraminate lyase (297 aa).

2 residues coordinate aceneuramate: Ser-47 and Thr-48. Tyr-137 serves as the catalytic Proton donor. Lys-165 acts as the Schiff-base intermediate with substrate in catalysis. Residues Thr-167, Gly-189, Asp-191, Glu-192, and Ser-208 each contribute to the aceneuramate site.

This sequence belongs to the DapA family. NanA subfamily. Homotetramer.

The protein localises to the cytoplasm. It catalyses the reaction aceneuramate = aldehydo-N-acetyl-D-mannosamine + pyruvate. It functions in the pathway amino-sugar metabolism; N-acetylneuraminate degradation; D-fructose 6-phosphate from N-acetylneuraminate: step 1/5. In terms of biological role, catalyzes the reversible aldol cleavage of N-acetylneuraminic acid (sialic acid; Neu5Ac) to form pyruvate and N-acetylmannosamine (ManNAc) via a Schiff base intermediate. The chain is N-acetylneuraminate lyase from Citrobacter koseri (strain ATCC BAA-895 / CDC 4225-83 / SGSC4696).